Here is a 443-residue protein sequence, read N- to C-terminus: Ribulose bisphosphate carboxylase large chain (443 aa).

Substrate contacts are provided by Asn-89 and Thr-139. The active-site Proton acceptor is Lys-141. Lys-143 lines the substrate pocket. The Mg(2+) site is built by Lys-167, Asp-169, and Glu-170. Lys-167 bears the N6-carboxylysine mark. His-260 (proton acceptor) is an active-site residue. Substrate contacts are provided by Arg-261, His-293, and Ser-345.

It belongs to the RuBisCO large chain family. Type I subfamily. As to quaternary structure, heterohexadecamer of 8 large chains and 8 small chains; disulfide-linked. The disulfide link is formed within the large subunit homodimers. Mg(2+) is required as a cofactor. In terms of processing, the disulfide bond which can form in the large chain dimeric partners within the hexadecamer appears to be associated with oxidative stress and protein turnover.

It localises to the plastid. The protein resides in the chloroplast. It carries out the reaction 2 (2R)-3-phosphoglycerate + 2 H(+) = D-ribulose 1,5-bisphosphate + CO2 + H2O. The enzyme catalyses D-ribulose 1,5-bisphosphate + O2 = 2-phosphoglycolate + (2R)-3-phosphoglycerate + 2 H(+). Its function is as follows. RuBisCO catalyzes two reactions: the carboxylation of D-ribulose 1,5-bisphosphate, the primary event in carbon dioxide fixation, as well as the oxidative fragmentation of the pentose substrate in the photorespiration process. Both reactions occur simultaneously and in competition at the same active site. The protein is Ribulose bisphosphate carboxylase large chain of Verbena bonariensis (Argentinian vervain).